Consider the following 301-residue polypeptide: uncharacterized protein (301 aa).

Positions 1-21 (MKIKLILVLIVFLTIVNVNNS) are cleaved as a signal peptide. 4 N-linked (GlcNAc...) asparagine glycosylation sites follow: Asn-19, Asn-59, Asn-102, and Asn-180.

It localises to the secreted. This is an uncharacterized protein from Dictyostelium discoideum (Social amoeba).